The sequence spans 78 residues: Translation initiation factor IF-1, plastid (78 aa).

The S1-like domain maps to 1 to 72; sequence MKKQDLIDME…TKGRITYRLR (72 aa).

Belongs to the IF-1 family. Component of the 30S ribosomal translation pre-initiation complex which assembles on the 30S ribosome in the order IF-2 and IF-3, IF-1 and N-formylmethionyl-tRNA(fMet); mRNA recruitment can occur at any time during PIC assembly.

It localises to the plastid. One of the essential components for the initiation of protein synthesis. Stabilizes the binding of IF-2 and IF-3 on the 30S subunit to which N-formylmethionyl-tRNA(fMet) subsequently binds. Helps modulate mRNA selection, yielding the 30S pre-initiation complex (PIC). Upon addition of the 50S ribosomal subunit IF-1, IF-2 and IF-3 are released leaving the mature 70S translation initiation complex. This Aneura mirabilis (Parasitic liverwort) protein is Translation initiation factor IF-1, plastid.